The following is a 468-amino-acid chain: Chitoporin (468 aa).

A signal peptide spans 1-32 (MRTFSGKRSTLALAIAGVTAMSGFMAMPEARA).

It belongs to the outer membrane porin (Opr) (TC 1.B.25) family.

It is found in the cell outer membrane. Functionally, involved in the uptake of chitosugars. This chain is Chitoporin (chiP), found in Escherichia coli (strain K12).